The sequence spans 145 residues: Deoxyuridine 5'-triphosphate nucleotidohydrolase (145 aa).

Residues R63–G65, N76, T80–D82, and K90 contribute to the substrate site.

It belongs to the dUTPase family. The cofactor is Mg(2+).

It catalyses the reaction dUTP + H2O = dUMP + diphosphate + H(+). The protein operates within pyrimidine metabolism; dUMP biosynthesis; dUMP from dCTP (dUTP route): step 2/2. Its function is as follows. This enzyme is involved in nucleotide metabolism: it produces dUMP, the immediate precursor of thymidine nucleotides and it decreases the intracellular concentration of dUTP so that uracil cannot be incorporated into DNA. The chain is Deoxyuridine 5'-triphosphate nucleotidohydrolase from Clostridium acetobutylicum (strain ATCC 824 / DSM 792 / JCM 1419 / IAM 19013 / LMG 5710 / NBRC 13948 / NRRL B-527 / VKM B-1787 / 2291 / W).